Here is a 399-residue protein sequence, read N- to C-terminus: 3-dehydroquinate synthase (399 aa).

The protein belongs to the archaeal-type DHQ synthase family.

The catalysed reaction is 2-amino-2,3,7-trideoxy-D-lyxo-hept-6-ulosonate + NAD(+) + H2O = 3-dehydroquinate + NH4(+) + NADH + H(+). Its function is as follows. Catalyzes the oxidative deamination and cyclization of 2-amino-3,7-dideoxy-D-threo-hept-6-ulosonic acid (ADH) to yield 3-dehydroquinate (DHQ), which is fed into the canonical shikimic pathway of aromatic amino acid biosynthesis. The polypeptide is 3-dehydroquinate synthase (Haloquadratum walsbyi (strain DSM 16790 / HBSQ001)).